Here is a 308-residue protein sequence, read N- to C-terminus: UPF0026 protein HP_0117 (308 aa).

The region spanning 18–248 is the Radical SAM core domain; sequence FGKSLGVDLS…SLPKRSITQA (231 aa). Positions 33, 37, and 40 each coordinate [4Fe-4S] cluster.

It belongs to the UPF0026 family. It depends on [4Fe-4S] cluster as a cofactor.

This is UPF0026 protein HP_0117 from Helicobacter pylori (strain ATCC 700392 / 26695) (Campylobacter pylori).